The sequence spans 472 residues: Bone morphogenetic protein 3 (472 aa).

Residues 1-22 form the signal peptide; it reads MAGASRLLFLWLGCFCVSLAQG. Residues 23–362 constitute a propeptide that is removed on maturation; the sequence is ERPKPPFPEL…EQTLKKARRK (340 aa). The span at 27–37 shows a compositional bias: basic and acidic residues; it reads PPFPELRKAVP. Residues 27–53 form a disordered region; that stretch reads PPFPELRKAVPGDRTAGGGPDSELQPQ. 4 N-linked (GlcNAc...) asparagine glycosylation sites follow: asparagine 117, asparagine 141, asparagine 175, and asparagine 220. The segment at 320–350 is disordered; that stretch reads PYKTLQAQAPEKSKNKKKQRKGPHRKSQTLQ. Residues 333-346 show a composition bias toward basic residues; it reads KNKKKQRKGPHRKS. Disulfide bonds link cysteine 370-cysteine 437, cysteine 399-cysteine 469, and cysteine 403-cysteine 471. N-linked (GlcNAc...) asparagine glycosylation occurs at asparagine 463.

It belongs to the TGF-beta family. As to quaternary structure, homodimer; disulfide-linked. Interacts with type II receptor ACVR2B. As to expression, expressed in adult and fetal cartilage.

It localises to the secreted. Its function is as follows. Growth factor of the TGF-beta superfamily that plays an essential role in developmental process by inducing and patterning early skeletal formation and by negatively regulating bone density. Antagonizes the ability of certain osteogenic BMPs to induce osteoprogenitor differentiation and ossification. Initiates signaling cascades by associating with type II receptor ACVR2B to activate SMAD2-dependent and SMAD-independent signaling cascades including TAK1 and JNK pathways. In Homo sapiens (Human), this protein is Bone morphogenetic protein 3 (BMP3).